The chain runs to 73 residues: Large ribosomal subunit protein uL24 (73 aa).

Residues 51–65 are compositionally biased toward basic and acidic residues; that stretch reads DDNPKGGFIHKEKPM. The tract at residues 51–73 is disordered; that stretch reads DDNPKGGFIHKEKPMHISNVKKA.

The protein belongs to the universal ribosomal protein uL24 family. Part of the 50S ribosomal subunit.

One of two assembly initiator proteins, it binds directly to the 5'-end of the 23S rRNA, where it nucleates assembly of the 50S subunit. In terms of biological role, one of the proteins that surrounds the polypeptide exit tunnel on the outside of the subunit. The polypeptide is Large ribosomal subunit protein uL24 (Helicobacter pylori (strain Shi470)).